Reading from the N-terminus, the 80-residue chain is Calmodulin (80 aa).

EF-hand domains follow at residues 12–47 (DSEEEIREAFRVFDKDGNGFISAAELRHVMTNLGEK) and 48–80 (LTDEEVDEMIREADIDGDGQVNYEEFVAMMTSK). Asp25, Asp27, Asn29, Glu36, Asp61, Asp63, Asp65, Gln67, and Glu72 together coordinate Ca(2+).

The protein belongs to the calmodulin family.

Its function is as follows. Calmodulin mediates the control of a large number of enzymes, ion channels and other proteins by Ca(2+). Among the enzymes to be stimulated by the calmodulin-Ca(2+) complex are a number of protein kinases and phosphatases. This chain is Calmodulin, found in Strongylocentrotus purpuratus (Purple sea urchin).